The chain runs to 297 residues: MTTPRNSVNGTFPAEPMKGPIAMQSGPKPLFRRMSSLVGPTQSFFMRESKTLGAVQIMNGLFHIALGGLLMIPAGIYAPICVTVWYPLWGGIMYIISGSLLAATEKNSRKCLVKGKMIMNSLSLFAAISGMILSIMDILNIKISHFLKMESLNFIRAHTPYINIYNCEPANPSEKNSPSTQYCYSIQSLFLGILSVMLIFAFFQELVIAGIVENEWKRTCSRPKSNIVLLSAEEKKEQTIEIKEEVVGLTETSSQPKNEEDIEIIPIQEEEEEETETNFPEPPQDQESSPIENDSSP.

Residues methionine 1–glutamine 56 are Cytoplasmic-facing. A Phosphoserine modification is found at serine 36. A helical membrane pass occupies residues isoleucine 57 to alanine 78. Residues alanine 74–isoleucine 80 are epitope 1. Topologically, residues proline 79–valine 84 are extracellular. A helical transmembrane segment spans residues tryptophan 85–glutamate 105. Over lysine 106 to asparagine 120 the chain is Cytoplasmic. Cysteine 111 carries the S-palmitoyl cysteine lipid modification. A helical transmembrane segment spans residues serine 121–isoleucine 141. Residues lysine 142–serine 188 are Extracellular-facing. Residues phenylalanine 146–proline 160 are epitope 2. A disulfide bridge connects residues cysteine 167 and cysteine 183. An epitope 3 (recognized by antibodies, including Rituximab) region spans residues glutamate 168–lysine 175. A helical transmembrane segment spans residues leucine 189–alanine 209. The Cytoplasmic segment spans residues glycine 210–proline 297. Cysteine 220 carries the S-palmitoyl cysteine lipid modification. Serine 225 carries the phosphoserine modification. Threonine 239 carries the post-translational modification Phosphothreonine. The segment at valine 247–proline 297 is disordered. Residues glutamate 260–glutamate 276 show a composition bias toward acidic residues. The segment covering aspartate 285–proline 297 has biased composition (polar residues).

It belongs to the MS4A family. In terms of assembly, forms homotetramers. Interacts with the heavy and light chains of cell surface IgM, the antigen-binding components of the BCR. Post-translationally, phosphorylated on serines and threonines in resting B-cells. Protein kinase C/PKC can use CD20 as substrate. Expressed on B-cells.

It is found in the cell membrane. In terms of biological role, B-lymphocyte-specific membrane protein that plays a role in the regulation of cellular calcium influx necessary for the development, differentiation, and activation of B-lymphocytes. Functions as a store-operated calcium (SOC) channel component promoting calcium influx after activation by the B-cell receptor/BCR. The sequence is that of B-lymphocyte antigen CD20 (MS4A1) from Homo sapiens (Human).